Consider the following 147-residue polypeptide: Large ribosomal subunit protein uL13 (147 aa).

Belongs to the universal ribosomal protein uL13 family. Part of the 50S ribosomal subunit.

This protein is one of the early assembly proteins of the 50S ribosomal subunit, although it is not seen to bind rRNA by itself. It is important during the early stages of 50S assembly. The sequence is that of Large ribosomal subunit protein uL13 from Leuconostoc citreum (strain KM20).